The sequence spans 436 residues: Histone acetyltransferase type B subunit 2 (436 aa).

WD repeat units lie at residues 136–176, 187–227, 237–277, 284–324, and 328–368; these read DHKG…SLPT, GHTK…KGNK, HHSS…TTRA, QHRD…TKLH, and SHTD…EEQT. The tract at residues 370–374 is interaction with the histone H4 N-terminus; sequence EDAQD. A WD 6 repeat occupies 385 to 425; sequence GHTNRISDFSWNLNDPWVLCSAAEDNLLQVWKVADAIVGKD.

The protein belongs to the WD repeat RBAP46/RBAP48/MSI1 family. As to quaternary structure, component of the HAT-B complex composed of at least hat1 and hat2. The HAT-B complex binds to histone H4 tail.

Its subcellular location is the cytoplasm. The protein localises to the nucleus. Its function is as follows. Regulatory subunit of the histone acetylase B (HAT-B) complex. The complex acetylates 'Lys-12' of histone H4 which is required for telomeric silencing. This Aspergillus fumigatus (strain ATCC MYA-4609 / CBS 101355 / FGSC A1100 / Af293) (Neosartorya fumigata) protein is Histone acetyltransferase type B subunit 2 (hat2).